Consider the following 39-residue polypeptide: Photosystem II reaction center protein L (39 aa).

A helical transmembrane segment spans residues 18-38 (SLYLGLLLVFVTAVLFTSYFF).

The protein belongs to the PsbL family. In terms of assembly, PSII is composed of 1 copy each of membrane proteins PsbA, PsbB, PsbC, PsbD, PsbE, PsbF, PsbH, PsbI, PsbJ, PsbK, PsbL, PsbM, PsbT, PsbX, PsbY, Psb30/Ycf12, peripheral proteins PsbO, CyanoQ (PsbQ), PsbU, PsbV and a large number of cofactors. It forms dimeric complexes.

Its subcellular location is the cellular thylakoid membrane. Functionally, one of the components of the core complex of photosystem II (PSII). PSII is a light-driven water:plastoquinone oxidoreductase that uses light energy to abstract electrons from H(2)O, generating O(2) and a proton gradient subsequently used for ATP formation. It consists of a core antenna complex that captures photons, and an electron transfer chain that converts photonic excitation into a charge separation. This subunit is found at the monomer-monomer interface and is required for correct PSII assembly and/or dimerization. In Prochlorococcus marinus (strain MIT 9313), this protein is Photosystem II reaction center protein L.